Reading from the N-terminus, the 86-residue chain is YcgL domain-containing protein XC_4086 (86 aa).

The 83-residue stretch at 1–83 folds into the YcgL domain; sequence MHAYVYKSQR…PKTVVLAGEC (83 aa).

This Xanthomonas campestris pv. campestris (strain 8004) protein is YcgL domain-containing protein XC_4086.